Consider the following 335-residue polypeptide: 3-hydroxyisobutyrate dehydrogenase, mitochondrial (335 aa).

The N-terminal 35 residues, 1–35 (MAASLGFRGAASGLRYWSGRRRPVGSLAAVCSRSM), are a transit peptide targeting the mitochondrion. 39-68 (TPVGFIGLGNMGNPMAKNLIKHGYPLILYD) provides a ligand contact to NAD(+). Lysine 59 and lysine 75 each carry N6-acetyllysine; alternate. 2 positions are modified to N6-succinyllysine; alternate: lysine 59 and lysine 75. Lysine 94 carries the post-translational modification N6-succinyllysine. Residues 102-103 (LP) and asparagine 107 contribute to the NAD(+) site. Lysine 120 bears the N6-acetyllysine mark. Threonine 133 lines the NAD(+) pocket. Residue lysine 140 is modified to N6-succinyllysine. Lysine 144 is subject to N6-acetyllysine. Lysine 148 carries the post-translational modification N6-acetyllysine; alternate. Lysine 148 is modified (N6-succinyllysine; alternate). Lysine 208 is an active-site residue. N6-acetyllysine; alternate is present on residues lysine 237 and lysine 241. Residues lysine 237 and lysine 241 each carry the N6-succinyllysine; alternate modification. Residue lysine 283 coordinates NAD(+). At lysine 296 the chain carries N6-succinyllysine. Residue lysine 320 is modified to N6-acetyllysine; alternate. Position 320 is an N6-succinyllysine; alternate (lysine 320).

The protein belongs to the HIBADH-related family. 3-hydroxyisobutyrate dehydrogenase subfamily. In terms of assembly, homodimer. As to expression, higher level in kidney, liver, and heart than in muscle.

The protein localises to the mitochondrion. The enzyme catalyses 3-hydroxy-2-methylpropanoate + NAD(+) = 2-methyl-3-oxopropanoate + NADH + H(+). It participates in amino-acid degradation; L-valine degradation. This chain is 3-hydroxyisobutyrate dehydrogenase, mitochondrial (Hibadh), found in Rattus norvegicus (Rat).